A 204-amino-acid chain; its full sequence is Superoxide dismutase [Mn] (204 aa).

The Mn(2+) site is built by His-29, His-84, Asp-167, and His-171.

Belongs to the iron/manganese superoxide dismutase family. In terms of assembly, homotetramer. Mn(2+) serves as cofactor.

The catalysed reaction is 2 superoxide + 2 H(+) = H2O2 + O2. Functionally, destroys superoxide anion radicals which are normally produced within the cells and which are toxic to biological systems. The polypeptide is Superoxide dismutase [Mn] (sodA) (Thermus thermophilus (strain ATCC BAA-163 / DSM 7039 / HB27)).